The sequence spans 865 residues: ABC transporter ATP-binding/permease protein Rv1747 (865 aa).

The region spanning 29-78 (VVVGRDLRADVRVAHPLISRAHLLLRFDQGRWVAIDNGSLNGLYLNNRRV) is the FHA 1 domain. Residues 104–205 (GRHRGSAGRP…PAGARGGTEA (102 aa)) form a disordered region. Positions 135–156 (PQTGTLGSGQLQQLPPATTRIP) are enriched in low complexity. Phosphothreonine is present on threonine 152. The span at 157–166 (AAPPSGPQPR) shows a compositional bias: pro residues. Residue threonine 210 is modified to Phosphothreonine. The FHA 2 domain maps to 230 to 279 (VRIGRANDNDIVIPEVLASRHHATLVPTPGGTEIRDNRSINGTFVNGARV). Residues 319-552 (LDVRGVTWTI…VMGTTNWADI (234 aa)) enclose the ABC transporter domain. Residue 352–359 (GPSGAGKS) participates in ATP binding. The ABC transmembrane type-2 domain occupies 596–810 (RQFSTIARRQ…TPARWGFAAS (215 aa)). The next 6 helical transmembrane spans lie at 614-634 (GYFV…MSVP), 652-672 (PGQI…ALTI), 700-720 (VCVY…IVLV), 740-760 (FVDV…LSAI), 767-787 (IMPL…GMIP), and 836-856 (SAWW…VGFV).

In the central section; belongs to the ABC transporter superfamily. This sequence in the C-terminal section; belongs to the ABC-2 integral membrane protein family. In terms of assembly, homodimer. Interacts with PknF. Post-translationally, phosphorylated by PknF. Can probably be phosphorylated in vivo by other kinases when PknF is missing.

It is found in the cell membrane. Its activity is regulated as follows. Function is positively regulated by phosphorylation. Functionally, involved in the translocation of an unknown substrate across the membrane. Transmembrane domains (TMD) form a pore in the membrane and the ATP-binding domain (NBD) is responsible for energy generation. Required for virulence. The chain is ABC transporter ATP-binding/permease protein Rv1747 from Mycobacterium tuberculosis (strain ATCC 25618 / H37Rv).